The sequence spans 264 residues: [LysW]-aminoadipate/[LysW]-glutamate kinase (264 aa).

Residues 35–36 (GG), R62, and N167 each bind substrate.

This sequence belongs to the acetylglutamate kinase family. LysZ subfamily.

It is found in the cytoplasm. The catalysed reaction is [amino-group carrier protein]-C-terminal-N-(1,4-dicarboxybutan-1-yl)-L-glutamine + ATP = [amino-group carrier protein]-C-terminal-N-(1-carboxy-5-phosphooxy-5-oxopentan-1-yl)-L-glutamine + ADP. The enzyme catalyses [amino-group carrier protein]-C-terminal-gamma-(L-glutamyl)-L-glutamate + ATP = [amino-group carrier protein]-C-terminal-gamma-(5-phospho-L-glutamyl)-L-glutamate + ADP. Its pathway is amino-acid biosynthesis; L-lysine biosynthesis via AAA pathway; L-lysine from L-alpha-aminoadipate (Thermus route): step 2/5. It participates in amino-acid biosynthesis; L-arginine biosynthesis. Involved in both the arginine and lysine biosynthetic pathways. Phosphorylates the LysW-bound precursors glutamate (for arginine biosynthesis), respectively alpha-aminoadipate (for lysine biosynthesis). The protein is [LysW]-aminoadipate/[LysW]-glutamate kinase of Saccharolobus islandicus (strain Y.N.15.51 / Yellowstone #2) (Sulfolobus islandicus).